Here is a 289-residue protein sequence, read N- to C-terminus: Urease accessory protein UreD (289 aa).

The protein belongs to the UreD family. UreD, UreF and UreG form a complex that acts as a GTP-hydrolysis-dependent molecular chaperone, activating the urease apoprotein by helping to assemble the nickel containing metallocenter of UreC. The UreE protein probably delivers the nickel.

It is found in the cytoplasm. Required for maturation of urease via the functional incorporation of the urease nickel metallocenter. The polypeptide is Urease accessory protein UreD (Cupriavidus necator (strain ATCC 17699 / DSM 428 / KCTC 22496 / NCIMB 10442 / H16 / Stanier 337) (Ralstonia eutropha)).